Consider the following 187-residue polypeptide: Flavin prenyltransferase UbiX (187 aa).

Residues 9–11 (GSS), Thr-34, 88–91 (SISS), and Arg-123 contribute to the FMN site. Tyr-153 and Lys-169 together coordinate dimethylallyl phosphate.

It belongs to the UbiX/PAD1 family.

The enzyme catalyses dimethylallyl phosphate + FMNH2 = prenylated FMNH2 + phosphate. In terms of biological role, flavin prenyltransferase that catalyzes the synthesis of the prenylated FMN cofactor (prenyl-FMN) for 4-hydroxy-3-polyprenylbenzoic acid decarboxylase UbiD. The prenyltransferase is metal-independent and links a dimethylallyl moiety from dimethylallyl monophosphate (DMAP) to the flavin N5 and C6 atoms of FMN. This is Flavin prenyltransferase UbiX from Campylobacter jejuni subsp. jejuni serotype O:2 (strain ATCC 700819 / NCTC 11168).